The chain runs to 696 residues: Mitosis initiation protein fs(1)Ya (696 aa).

Disordered stretches follow at residues Asn-245–Lys-285, Glu-336–Ser-379, and Ile-457–Ile-492. Low complexity-rich tracts occupy residues Gln-270–Gln-281 and Ser-361–Ser-379. Residues Thr-448 to Gln-696 form a rich in charged AA region. Residues Thr-478, Thr-484, and Thr-489 each carry the phosphothreonine modification. 2 consecutive short sequence motifs (nuclear localization signal) follow at residues Pro-512–Lys-520 and Gln-534–Arg-538. Disordered stretches follow at residues Asp-555–Ala-586 and Pro-603–Gln-696. The span at Gly-557 to Glu-569 shows a compositional bias: acidic residues. Basic and acidic residues-rich tracts occupy residues Arg-607–Asn-624 and Arg-685–Gln-696.

The protein resides in the nucleus envelope. The protein localises to the nucleus. It localises to the nucleoplasm. Its subcellular location is the cytoplasm. Its function is as follows. Cell cycle-dependent nuclear envelope component required for embryonic mitosis. The protein is Mitosis initiation protein fs(1)Ya (fs(1)Ya) of Drosophila melanogaster (Fruit fly).